The following is a 983-amino-acid chain: UPF0182 protein CMM_1204 (983 aa).

The next 7 membrane-spanning stretches (helical) occupy residues 16–36 (LAITAAIIAALVIAFFIFAGF), 56–76 (WGAGIALFLVGFLAMAIPVFV), 108–128 (LAMFAIPAVFGLFAGVSASSG), 161–181 (FYHAVVGFASAVVIISMLGVL), 205–225 (IQIAITAGVYFLLQGVSIWLD), 255–275 (AILAGIAGVVALFFIVTAVIG), and 281–301 (IIGTAGLIVASILVGTAYPAI). A compositionally biased stretch (polar residues) spans 699 to 714 (QDLWTTPNDPTATTEA). Disordered stretches follow at residues 699-718 (QDLWTTPNDPTATTEAGTPA) and 884-936 (DSGA…AQDV). Gly residues predominate over residues 902–918 (GGTGDGATDGATDGGTG). Residues 919-933 (STPTPAPTTSPSAPA) show a composition bias toward low complexity.

The protein belongs to the UPF0182 family.

The protein resides in the cell membrane. The protein is UPF0182 protein CMM_1204 of Clavibacter michiganensis subsp. michiganensis (strain NCPPB 382).